The primary structure comprises 421 residues: Serine--tRNA ligase (421 aa).

An L-serine-binding site is contributed by 232-234 (TAE). ATP is bound at residue 262 to 264 (RSE). Glu285 contacts L-serine. 349 to 352 (EVSS) is a binding site for ATP. Ser384 contributes to the L-serine binding site.

This sequence belongs to the class-II aminoacyl-tRNA synthetase family. Type-1 seryl-tRNA synthetase subfamily. As to quaternary structure, homodimer. The tRNA molecule binds across the dimer.

It is found in the cytoplasm. It catalyses the reaction tRNA(Ser) + L-serine + ATP = L-seryl-tRNA(Ser) + AMP + diphosphate + H(+). It carries out the reaction tRNA(Sec) + L-serine + ATP = L-seryl-tRNA(Sec) + AMP + diphosphate + H(+). It participates in aminoacyl-tRNA biosynthesis; selenocysteinyl-tRNA(Sec) biosynthesis; L-seryl-tRNA(Sec) from L-serine and tRNA(Sec): step 1/1. Its function is as follows. Catalyzes the attachment of serine to tRNA(Ser). Is also able to aminoacylate tRNA(Sec) with serine, to form the misacylated tRNA L-seryl-tRNA(Sec), which will be further converted into selenocysteinyl-tRNA(Sec). This is Serine--tRNA ligase from Mycoplasma mobile (strain ATCC 43663 / 163K / NCTC 11711) (Mesomycoplasma mobile).